The following is a 676-amino-acid chain: Urocanate hydratase (676 aa).

NAD(+)-binding positions include 126-127, Gln-204, 251-253, Glu-271, 317-318, 343-347, 354-355, and Tyr-403; these read GG, GMS, NV, QTSCH, and YY. Lys-534 carries the post-translational modification N6-succinyllysine. Gly-594 contacts NAD(+).

This sequence belongs to the urocanase family. NAD(+) serves as cofactor.

It catalyses the reaction 4-imidazolone-5-propanoate = trans-urocanate + H2O. Its pathway is amino-acid degradation; L-histidine degradation into L-glutamate; N-formimidoyl-L-glutamate from L-histidine: step 2/3. The protein is Urocanate hydratase (Uroc1) of Mus musculus (Mouse).